Here is a 62-residue protein sequence, read N- to C-terminus: MAKTIVVKQIGSPIRRPADQRATLVGLGLNKMHKTRELEDTPSVRGMIRKIPHLVEIIEERG.

The protein belongs to the universal ribosomal protein uL30 family. Part of the 50S ribosomal subunit.

The protein is Large ribosomal subunit protein uL30 of Ruegeria pomeroyi (strain ATCC 700808 / DSM 15171 / DSS-3) (Silicibacter pomeroyi).